The primary structure comprises 448 residues: Putative F-box/LRR-repeat protein At3g44810 (448 aa).

An F-box domain is found at 6–54 (TASLNCLPDELLVHVLSSLETKQAASTSVLSKRWRTLFAVRRNLDFDDS). LRR repeat units lie at residues 117–141 (VSEL…VFRS), 143–165 (TLVK…TCLP), 190–213 (CPAL…VSSK), 228–251 (FDWF…TYAR), 290–313 (VRNV…CKGG), and 421–443 (IVDS…SSRL).

The sequence is that of Putative F-box/LRR-repeat protein At3g44810 from Arabidopsis thaliana (Mouse-ear cress).